A 72-amino-acid chain; its full sequence is SRY-related protein ADW4 (72 aa).

The segment at residues 1–69 (VKRPMNAFMV…KHMADYPNYK (69 aa)) is a DNA-binding region (HMG box).

It localises to the nucleus. In Alligator mississippiensis (American alligator), this protein is SRY-related protein ADW4.